The sequence spans 157 residues: Ribosomal RNA large subunit methyltransferase H (157 aa).

S-adenosyl-L-methionine contacts are provided by residues L73, G105, and 124–129 (LSKMTF).

The protein belongs to the RNA methyltransferase RlmH family. In terms of assembly, homodimer.

It is found in the cytoplasm. It catalyses the reaction pseudouridine(1915) in 23S rRNA + S-adenosyl-L-methionine = N(3)-methylpseudouridine(1915) in 23S rRNA + S-adenosyl-L-homocysteine + H(+). Functionally, specifically methylates the pseudouridine at position 1915 (m3Psi1915) in 23S rRNA. This chain is Ribosomal RNA large subunit methyltransferase H, found in Phocaeicola vulgatus (strain ATCC 8482 / DSM 1447 / JCM 5826 / CCUG 4940 / NBRC 14291 / NCTC 11154) (Bacteroides vulgatus).